The sequence spans 169 residues: Der GTPase-activating protein YihI (169 aa).

2 disordered regions span residues 1-75 and 144-169; these read MKPS…IPLG and GLSY…LRGN. Basic residues predominate over residues 10 to 19; the sequence is SKGHAKARRK. The segment covering 20–30 has biased composition (basic and acidic residues); that stretch reads TREELDQEARD. Positions 31–40 are enriched in basic residues; sequence RKRQKKRRGH. The span at 49-58 shows a compositional bias: polar residues; sequence GNTTSGSKGQ. The span at 147 to 159 shows a compositional bias: acidic residues; the sequence is YDDDEEEEEDEKQ. Residues 160-169 show a composition bias toward basic and acidic residues; that stretch reads EDMMRLLRGN.

It belongs to the YihI family. In terms of assembly, interacts with Der.

In terms of biological role, a GTPase-activating protein (GAP) that modifies Der/EngA GTPase function. May play a role in ribosome biogenesis. The polypeptide is Der GTPase-activating protein YihI (Escherichia coli (strain 55989 / EAEC)).